A 131-amino-acid chain; its full sequence is Methylglyoxal synthase (131 aa).

The MGS-like domain occupies 1 to 131 (MKIALIAHDK…GDLDYRKLRK (131 aa)). Residues His8, Lys12, 34-37 (TGTT), and 54-55 (SG) contribute to the substrate site. The active-site Proton donor/acceptor is Asp60. His87 contacts substrate.

The protein belongs to the methylglyoxal synthase family.

The catalysed reaction is dihydroxyacetone phosphate = methylglyoxal + phosphate. In terms of biological role, catalyzes the formation of methylglyoxal from dihydroxyacetone phosphate. The chain is Methylglyoxal synthase from Bacillus cereus (strain ATCC 10987 / NRS 248).